The sequence spans 134 residues: uncharacterized protein (134 aa).

The N-terminal stretch at 1-16 (MAKAVALLLAAIAASA) is a signal peptide.

This is an uncharacterized protein from Oryza sativa subsp. indica (Rice).